The primary structure comprises 158 residues: Ribosome maturation factor RimP (158 aa).

This sequence belongs to the RimP family.

Its subcellular location is the cytoplasm. Its function is as follows. Required for maturation of 30S ribosomal subunits. This is Ribosome maturation factor RimP from Deinococcus radiodurans (strain ATCC 13939 / DSM 20539 / JCM 16871 / CCUG 27074 / LMG 4051 / NBRC 15346 / NCIMB 9279 / VKM B-1422 / R1).